The following is a 1059-amino-acid chain: Ubiquitin carboxyl-terminal hydrolase 36 (1059 aa).

2 disordered regions span residues 24 to 49 and 94 to 148; these read VGNGSRAADEAKKTGGGGGDDSDSEM and SNNN…KPKR. Low complexity predominate over residues 94–123; that stretch reads SNNNNSSSCNGSNFGNSKVVGANGHDNGNN. Residues 130–139 show a composition bias toward polar residues; it reads QSESTQSGPS. Residues 171–479 enclose the USP domain; the sequence is TGMINVGNTC…NAYIMFYELD (309 aa). C180 functions as the Nucleophile in the catalytic mechanism. Residue H438 is the Proton acceptor of the active site. Residues 505–673 are disordered; the sequence is TVSSSSPTHT…KTPLKSSVKT (169 aa). Phosphoserine is present on residues S508 and S510. The segment covering 528-539 has biased composition (polar residues); that stretch reads GYSNGHATGSSN. Composition is skewed to low complexity over residues 540-560, 592-611, and 633-647; these read AQKTAIQFKQQQQHPQQNGLQ, NGNKSSSSSASNSNHNKSVN, and ATATATATATARPTA. Basic and acidic residues predominate over residues 655 to 664; the sequence is MTEDSSDKPK. Phosphothreonine is present on residues T673 and T682. Disordered stretches follow at residues 687 to 893, 926 to 998, and 1012 to 1059; these read LVPY…EAST, KELV…RYHN, and KYNR…QSSS. S692 and S694 each carry phosphoserine. Composition is skewed to low complexity over residues 729–739 and 752–765; these read TKTNGGSLTNG and SSSSSLASASASAA. S766 carries the post-translational modification Phosphoserine. The span at 766-776 shows a compositional bias: acidic residues; sequence SDDEDADEEEE. Over residues 779–795 the composition is skewed to polar residues; the sequence is KLTNGWQPQKQSQSLTQ. The segment covering 799-808 has biased composition (pro residues); it reads PPSPKTPPSP. S801 bears the Phosphoserine mark. At T804 the chain carries Phosphothreonine. A Phosphoserine modification is found at S807. A compositionally biased stretch (acidic residues) spans 825-839; the sequence is DNEDEDDDDDEDEEE. Composition is skewed to polar residues over residues 842 to 862 and 876 to 893; these read QVVSTPSKNPRNPFAKSSTTP and KSQQQPRVGNGYQSEAST. T846 and T861 each carry phosphothreonine. Basic and acidic residues predominate over residues 926–940; the sequence is KELVAEAREQRQHDH. Over residues 1048–1059 the composition is skewed to low complexity; it reads QQQQQQSQQSSS.

The protein belongs to the peptidase C19 family. As to quaternary structure, interacts with atms/PAF1, but not with CycT.

The protein resides in the nucleus. Its subcellular location is the nucleolus. The catalysed reaction is Thiol-dependent hydrolysis of ester, thioester, amide, peptide and isopeptide bonds formed by the C-terminal Gly of ubiquitin (a 76-residue protein attached to proteins as an intracellular targeting signal).. Required for maintaining multiple types of adult stem cells, including male and female germline, epithelial follicle cell and intestinal stem cells. May function as a transcriptional repressor by continually deubiquiting histone H2B at the promoters of genes critical for cellular differentiation, thereby preventing histone H3 'Lys-4' trimethylation (H3K4). Controls selective autophagy activation by ubiquitinated proteins. The chain is Ubiquitin carboxyl-terminal hydrolase 36 (Usp36) from Drosophila pseudoobscura pseudoobscura (Fruit fly).